The following is a 254-amino-acid chain: PF03932 family protein CutC (254 aa).

Belongs to the CutC family.

It localises to the cytoplasm. In Yersinia pestis bv. Antiqua (strain Angola), this protein is PF03932 family protein CutC.